The following is a 792-amino-acid chain: Kinesin-associated protein 3 (792 aa).

Position 60 is a phosphoserine (serine 60). The span at 103–119 (LSGKEKKEKSSKPKDPP) shows a compositional bias: basic and acidic residues. A disordered region spans residues 103-124 (LSGKEKKEKSSKPKDPPPFEGM). ARM repeat units lie at residues 333–373 (FMEN…NLSF), 374–412 (DTGL…HISM), 494–533 (DGPT…NLTI), 578–620 (DDSC…QMVF), and 621–662 (HQAT…IIAE).

Heterotrimer of KIFAP3, KIF3A and KIF3B. Interacts with RAP1GDS1/SMG GDS. Interacts with SMC3 subunit of the cohesin complex. Phosphorylated on tyrosine residues by SRC in vitro; this reduces the binding affinity of the protein for RAP1GDS1.

Functionally, involved in tethering the chromosomes to the spindle pole and in chromosome movement. Binds to the tail domain of the KIF3A/KIF3B heterodimer to form a heterotrimeric KIF3 complex and may regulate the membrane binding of this complex. This Homo sapiens (Human) protein is Kinesin-associated protein 3 (KIFAP3).